The chain runs to 76 residues: Centromere protein W (76 aa).

This sequence belongs to the CENP-W/WIP1 family. As to quaternary structure, heterodimer with CENPT; this dimer coassembles with CENPS-CENPX heterodimers at centromeres to form the tetrameric CENP-T-W-S-X complex, which is a subcomplex of the large constitutive centromere-associated network (CCAN, also known as the interphase centromere complex or ICEN). Interacts with NPM1.

It is found in the nucleus. Its subcellular location is the chromosome. It localises to the centromere. The protein localises to the kinetochore. Component of the CENPA-NAC (nucleosome-associated) complex, a complex that plays a central role in assembly of kinetochore proteins, mitotic progression and chromosome segregation. The CENPA-NAC complex recruits the CENPA-CAD (nucleosome distal) complex and may be involved in incorporation of newly synthesized CENPA into centromeres. Part of a nucleosome-associated complex that binds specifically to histone H3-containing nucleosomes at the centromere, as opposed to nucleosomes containing CENPA. Component of the heterotetrameric CENP-T-W-S-X complex that binds and supercoils DNA, and plays an important role in kinetochore assembly. CENPW has a fundamental role in kinetochore assembly and function. It is one of the inner kinetochore proteins, with most further proteins binding downstream. Required for normal chromosome organization and normal progress through mitosis. In Gallus gallus (Chicken), this protein is Centromere protein W (CENPW).